Reading from the N-terminus, the 98-residue chain is A-type ATP synthase subunit F (98 aa).

Belongs to the V-ATPase F subunit family. As to quaternary structure, the A-type ATPase is composed of subunits A(3), B(3), C, D, E(1 or 2), F, H(2), I and K(x).

The protein localises to the cell membrane. Its function is as follows. Component of the A-type ATP synthase that produces ATP from ADP in the presence of a proton gradient across the membrane. The sequence is that of A-type ATP synthase subunit F from Methanocaldococcus jannaschii (strain ATCC 43067 / DSM 2661 / JAL-1 / JCM 10045 / NBRC 100440) (Methanococcus jannaschii).